Here is an 84-residue protein sequence, read N- to C-terminus: Putative defensin-like protein 114 (84 aa).

The signal sequence occupies residues 1-24 (MAITKKCFAAFVLILLFVMPFVYC). 4 disulfides stabilise this stretch: Cys41–Cys81, Cys47–Cys69, Cys54–Cys79, and Cys58–Cys80.

The protein belongs to the DEFL family.

The protein resides in the secreted. The chain is Putative defensin-like protein 114 from Arabidopsis thaliana (Mouse-ear cress).